The chain runs to 283 residues: uncharacterized protein (283 aa).

This is an uncharacterized protein from Streptomyces coelicolor (strain ATCC BAA-471 / A3(2) / M145).